We begin with the raw amino-acid sequence, 611 residues long: ATP-dependent zinc metalloprotease FtsH 1 (611 aa).

Residues 1–6 (MNDNNK) are Cytoplasmic-facing. Residues 7–27 (IIRSMVLYLLIFIAIYAMVQL) form a helical membrane-spanning segment. The Extracellular segment spans residues 28–107 (YSQSTEPITD…KSEPQVGPPW (80 aa)). The helical transmembrane segment at 108–128 (WVQMLPSLFLIVIFIIFWYIF) threads the bilayer. 124–131 (FWYIFMQQ) serves as a coordination point for ATP. Over 129–611 (MQQAQGGGGS…GEDIEGVQFA (483 aa)) the chain is Cytoplasmic. Position 423 (His423) interacts with Zn(2+). Residue Glu424 is part of the active site. The Zn(2+) site is built by His427 and Asp499.

This sequence in the central section; belongs to the AAA ATPase family. It in the C-terminal section; belongs to the peptidase M41 family. As to quaternary structure, homohexamer. The cofactor is Zn(2+).

The protein resides in the cell membrane. Its function is as follows. Acts as a processive, ATP-dependent zinc metallopeptidase for both cytoplasmic and membrane proteins. Plays a role in the quality control of integral membrane proteins. This Thermoanaerobacter sp. (strain X514) protein is ATP-dependent zinc metalloprotease FtsH 1.